Consider the following 660-residue polypeptide: U-box domain-containing protein 13 (660 aa).

The segment at 227–252 (DDNGEEQKVGVNSRSNGQTSTAASQK) is disordered. The segment covering 236 to 250 (GVNSRSNGQTSTAAS) has biased composition (polar residues). The region spanning 255–329 (VIPDDFRCPI…AQWCEANDIE (75 aa)) is the U-box domain. 5 ARM repeats span residues 384 to 423 (ADNRVAIAEAGAIPLLVGLLSTPDSRIQEHSVTALLNLSI), 425 to 464 (ENNKGAIVSAGAIPGIVQVLKKGSMEARENAAATLFSLSV), 466 to 505 (DENKVTIGALGAIPPLVVLLNEGTQRGKKDAATALFNLCI), 507 to 546 (QGNKGKAIRAGVIPTLTRLLTEPGSGMVDEALAILAILSS), and 548 to 587 (PEGKAIIGSSDAVPSLVEFIRTGSPRNRENAAAVLVHLCS). A disordered region spans residues 631–660 (AEQQKETAVSQPEEEAEPTHPESTTEAADT). The span at 651-660 (PESTTEAADT) shows a compositional bias: polar residues.

Binds to SD11, SD16, SD17, SD18, SD113, SD129 and SD25. In terms of processing, phosphorylated by SD1-6 and SD1-7.

The protein resides in the nucleus. The protein localises to the cytoplasm. The enzyme catalyses S-ubiquitinyl-[E2 ubiquitin-conjugating enzyme]-L-cysteine + [acceptor protein]-L-lysine = [E2 ubiquitin-conjugating enzyme]-L-cysteine + N(6)-ubiquitinyl-[acceptor protein]-L-lysine.. It participates in protein modification; protein ubiquitination. In terms of biological role, functions as an E3 ubiquitin ligase. The chain is U-box domain-containing protein 13 (PUB13) from Arabidopsis thaliana (Mouse-ear cress).